The primary structure comprises 190 residues: Segregation and condensation protein B (190 aa).

The protein belongs to the ScpB family. As to quaternary structure, homodimer. Homodimerization may be required to stabilize the binding of ScpA to the Smc head domains. Component of a cohesin-like complex composed of ScpA, ScpB and the Smc homodimer, in which ScpA and ScpB bind to the head domain of Smc. The presence of the three proteins is required for the association of the complex with DNA.

The protein resides in the cytoplasm. Functionally, participates in chromosomal partition during cell division. May act via the formation of a condensin-like complex containing Smc and ScpA that pull DNA away from mid-cell into both cell halves. In Bacillus mycoides (strain KBAB4) (Bacillus weihenstephanensis), this protein is Segregation and condensation protein B.